We begin with the raw amino-acid sequence, 493 residues long: Amphoterin-induced protein 1 (493 aa).

The signal sequence occupies residues 1 to 27; it reads MHPHRDPRGLWLLLPSLSLLLFEVARA. An LRRNT domain is found at 28-61; sequence GRAVVSCPAACLCASNILSCSKQQLPNVPHSLPS. Residues 28-372 are Extracellular-facing; the sequence is GRAVVSCPAA…LHGHHDTLNT (345 aa). Cystine bridges form between Cys34-Cys40 and Cys38-Cys47. LRR repeat units follow at residues 62–83, 87–108, 111–132, 135–156, 159–179, and 186–206; these read YTAL…WTPT, QLHS…AFSP, NLRY…LFSD, VLEV…AFDD, QLQK…ELVK, and KLTL…PDLQ. N-linked (GlcNAc...) asparagine glycosylation occurs at Asn72. The LRRCT domain maps to 221-272; sequence NPLNCDCELYQLFSHWQYRQLSSVMDFQEDLYCMNSKKLHNVFNLSFLNCGE. Cystine bridges form between Cys225-Cys253, Cys227-Cys270, and Cys290-Cys341. 4 N-linked (GlcNAc...) asparagine glycosylation sites follow: Asn264, Asn315, Asn349, and Asn360. Residues 269–353 enclose the Ig-like C2-type domain; the sequence is NCGEYKERAW…MGETFNETLS (85 aa). A helical transmembrane segment spans residues 373 to 393; it reads AYTTLVGCILSVVLVLIYLYL. At 394–493 the chain is on the cytoplasmic side; it reads TPCRCWCRGV…SVFSDTPIVV (100 aa). Residues 405-493 are disordered; the sequence is KPSSHQGDSL…SVFSDTPIVV (89 aa). Positions 408-424 are enriched in polar residues; it reads SHQGDSLSSSMLSTTPN. Residues 431–442 are compositionally biased toward basic and acidic residues; it reads GDKDDGFDRRVA. Ser477 and Ser481 each carry phosphoserine.

The protein belongs to the immunoglobulin superfamily. AMIGO family. As to quaternary structure, homodimer, and heterodimer with AMIGO2 and AMIGO3. Interacts with KCNB1.

It is found in the cell membrane. The protein resides in the perikaryon. Its subcellular location is the cell projection. The protein localises to the dendrite. It localises to the axon. Its function is as follows. Promotes growth and fasciculation of neurites from cultured hippocampal neurons. May be involved in fasciculation as well as myelination of developing neural axons. May have a role in regeneration as well as neural plasticity in the adult nervous system. May mediate homophilic as well as heterophilic cell-cell interaction and contribute to signal transduction through its intracellular domain. Assembled with KCNB1 modulates the gating characteristics of the delayed rectifier voltage-dependent potassium channel KCNB1. The protein is Amphoterin-induced protein 1 of Homo sapiens (Human).